We begin with the raw amino-acid sequence, 88 residues long: MANKLTAVIVVALAVAFMVNLDYANCSPAIASSYDAMEICIENCAQCKKMFGPWFEGSLCAESCIKARGKDIPECESFASISPFLNKL.

Residues 1–26 form the signal peptide; it reads MANKLTAVIVVALAVAFMVNLDYANC. 3 disulfides stabilise this stretch: Cys-40–Cys-64, Cys-44–Cys-60, and Cys-47–Cys-75.

It belongs to the insect eclosion hormone family.

The protein resides in the secreted. Neuropeptide that triggers the performance of ecdysis behaviors at the end of a molt. It triggers adult behavior patterns: larval, pupal and adult ecdysis, and plasticization during the molt. The protein is Eclosion hormone of Bombyx mori (Silk moth).